Consider the following 80-residue polypeptide: uncharacterized protein (80 aa).

This is an uncharacterized protein from Invertebrate iridescent virus 6 (IIV-6).